We begin with the raw amino-acid sequence, 139 residues long: SDRKTVSCPECGKCFTSRTYLNVHKKVHTGQTYSCSECGKSFLSRSHLNTHLRTHTGEKPYSCSECGKCFTSSAILITHKRIHTGERPFSCQECGKSFSYRSVFMEHQKIHTGEKPFSCSDCGKCFRYRSHLKVHSRIH.

C2H2-type zinc fingers lie at residues 6 to 28 (VSCPECGKCFTSRTYLNVHKKVH), 33 to 55 (YSCSECGKSFLSRSHLNTHLRTH), 61 to 83 (YSCSECGKCFTSSAILITHKRIH), 89 to 111 (FSCQECGKSFSYRSVFMEHQKIH), and 117 to 139 (FSCSDCGKCFRYRSHLKVHSRIH).

The protein belongs to the krueppel C2H2-type zinc-finger protein family.

The protein resides in the nucleus. In terms of biological role, may be involved in transcriptional regulation. This chain is Gastrula zinc finger protein XlCGF67.1, found in Xenopus laevis (African clawed frog).